A 195-amino-acid chain; its full sequence is Imidazoleglycerol-phosphate dehydratase (195 aa).

The protein belongs to the imidazoleglycerol-phosphate dehydratase family.

Its subcellular location is the cytoplasm. It carries out the reaction D-erythro-1-(imidazol-4-yl)glycerol 3-phosphate = 3-(imidazol-4-yl)-2-oxopropyl phosphate + H2O. It functions in the pathway amino-acid biosynthesis; L-histidine biosynthesis; L-histidine from 5-phospho-alpha-D-ribose 1-diphosphate: step 6/9. The polypeptide is Imidazoleglycerol-phosphate dehydratase (Citrifermentans bemidjiense (strain ATCC BAA-1014 / DSM 16622 / JCM 12645 / Bem) (Geobacter bemidjiensis)).